Consider the following 207-residue polypeptide: Hemin/hemoglobin-binding protein 1 (207 aa).

Positions 1-27 (MKKVLVFAAFIVLFSFSFLSTGLTAQA) are cleaved as a signal peptide. In terms of domain architecture, NEAT spans 29 to 148 (LKDGTYSVDY…RFDEGSAKAL (120 aa)). Residues 151 to 178 (AVKSSDNNTTTPATKSDSSNKVTNPKSS) form a disordered region. Over residues 154–178 (SSDNNTTTPATKSDSSNKVTNPKSS) the composition is skewed to polar residues. The NPKXZ sorting signal signature appears at 174–178 (NPKSS). The residue at position 177 (Ser177) is a Murein peptidoglycan amidated serine. The propeptide at 178-207 (SDSSQMFLYGIIFVATGAGLILLKRRAIFK) is removed by sortase B.

The protein localises to the secreted. It is found in the cell wall. Functionally, binds both host hemin and hemoglobin with affinity in the nanomolar range and presumably directs it to membrane transporters. The protein is Hemin/hemoglobin-binding protein 1 of Listeria monocytogenes serovar 1/2a (strain ATCC BAA-679 / EGD-e).